Consider the following 293-residue polypeptide: MTTARYRPTWDLALDPLVSCKLCLGEFPLEQMTTITQCQCVFCTMCLKQYVELLIKEGFETAISCPDSACPKRGHLQENEIECMVATEIMQRYRKLQFEKEVLLDPSRTWCPSSTCQAVCQLKESDTVLPQLVRCSVCTLEFCSACKASWHPDQDCQENVPITSFLPGESSSFFKADDDDAPIKRCPKCKVYIERDEGCAQMMCKNCKHAFCWYCLESLDDDFLLIHYDKGPCRNKLGHSRASVIWHRTQVVGIFAGFGLLLLVASPFLLLATPFVLCCKCKCSKGDDDPLPT.

Residues 16–237 form a TRIAD supradomain region; that stretch reads PLVSCKLCLG…YDKGPCRNKL (222 aa). Residues Cys20, Cys23, Cys43, Cys46, Cys111, Cys116, Cys135, Cys138, Cys143, Cys146, His151, Cys156, Cys186, and Cys189 each coordinate Zn(2+). Residues 20–70 form an RING-type 1 zinc finger; the sequence is CKLCLGEFPLEQMTTITQCQCVFCTMCLKQYVELLIKEGFETAISCPDSAC. The segment at 91–156 adopts an IBR-type zinc-finger fold; that stretch reads QRYRKLQFEK…KASWHPDQDC (66 aa). Residues 186–215 form an RING-type 2; atypical zinc finger; that stretch reads CPKCKVYIERDEGCAQMMCKNCKHAFCWYC. Residue Cys199 is part of the active site. Cys204, Cys207, Cys212, Cys215, His227, and Cys233 together coordinate Zn(2+). A helical membrane pass occupies residues 251-271; it reads VVGIFAGFGLLLLVASPFLLL.

It belongs to the RBR family. RNF144 subfamily.

It is found in the membrane. The enzyme catalyses [E2 ubiquitin-conjugating enzyme]-S-ubiquitinyl-L-cysteine + [acceptor protein]-L-lysine = [E2 ubiquitin-conjugating enzyme]-L-cysteine + [acceptor protein]-N(6)-ubiquitinyl-L-lysine.. It participates in protein modification; protein ubiquitination. In terms of biological role, E3 ubiquitin-protein ligase which accepts ubiquitin from E2 ubiquitin-conjugating enzymes ube2l3 and ube2l6 in the form of a thioester and then directly transfers the ubiquitin to targeted substrates. This Danio rerio (Zebrafish) protein is Probable E3 ubiquitin-protein ligase RNF144A-A (rnf144aa).